Reading from the N-terminus, the 375-residue chain is Tyrosine--tRNA ligase (375 aa).

Residues Y37, Y168, Q172, D175, and Q190 each coordinate L-tyrosine. Residues 251 to 255 carry the 'KMSKS' region motif; that stretch reads KMSKS. K254 provides a ligand contact to ATP.

This sequence belongs to the class-I aminoacyl-tRNA synthetase family. TyrS type 4 subfamily. As to quaternary structure, homodimer.

Its subcellular location is the cytoplasm. The enzyme catalyses tRNA(Tyr) + L-tyrosine + ATP = L-tyrosyl-tRNA(Tyr) + AMP + diphosphate + H(+). Its function is as follows. Catalyzes the attachment of tyrosine to tRNA(Tyr) in a two-step reaction: tyrosine is first activated by ATP to form Tyr-AMP and then transferred to the acceptor end of tRNA(Tyr). This is Tyrosine--tRNA ligase from Thermococcus sibiricus (strain DSM 12597 / MM 739).